Here is a 1495-residue protein sequence, read N- to C-terminus: Pregnancy zone protein (1495 aa).

The signal sequence occupies residues 1–24 (MRRNQLPTPAFLLLFLLLPRDATT). The cysteines at positions 48 and 86 are disulfide-linked. N-linked (GlcNAc...) asparagine glycans are attached at residues asparagine 55 and asparagine 157. 2 cysteine pairs are disulfide-bonded: cysteine 249–cysteine 298 and cysteine 267–cysteine 286. N-linked (GlcNAc...) asparagine glycosylation is found at asparagine 382, asparagine 405, and asparagine 412. The cysteines at positions 469 and 562 are disulfide-linked. N-linked (GlcNAc...) asparagine glycosylation occurs at asparagine 568. Intrachain disulfides connect cysteine 594–cysteine 783, cysteine 642–cysteine 689, cysteine 833–cysteine 861, cysteine 859–cysteine 895, cysteine 933–cysteine 1339, and cysteine 1092–cysteine 1140. The tract at residues 686–744 (PRFCQEFQHYPAMGGVAPQALAVAASGPGSSFRAMGVPMMGLDYSDEINQVVEVRETVR) is bait region. Asparagine 881 and asparagine 942 each carry an N-linked (GlcNAc...) asparagine glycan. The segment at residues 984-987 (CGEQ) is a cross-link (isoglutamyl cysteine thioester (Cys-Gln)). Residue asparagine 1003 is glycosylated (N-linked (GlcNAc...) asparagine). N-linked (GlcNAc...) asparagine glycans are attached at residues asparagine 1385 and asparagine 1443.

This sequence belongs to the protease inhibitor I39 (alpha-2-macroglobulin) family. As to expression, highest expression in liver, medium expression in ovary, heart and stomach. Low expression in lung, kidney and uterus. Protein found in plasma.

The protein localises to the secreted. Its function is as follows. Is able to inhibit all four classes of proteinases by a unique 'trapping' mechanism. This protein has a peptide stretch, called the 'bait region' which contains specific cleavage sites for different proteinases. When a proteinase cleaves the bait region, a conformational change is induced in the protein which traps the proteinase. The entrapped enzyme remains active against low molecular weight substrates (activity against high molecular weight substrates is greatly reduced). Following cleavage in the bait region, a thioester bond is hydrolyzed and mediates the covalent binding of the protein to the proteinase. The protein is Pregnancy zone protein (Pzp) of Mus musculus (Mouse).